We begin with the raw amino-acid sequence, 242 residues long: tRNA (guanine-N(7)-)-methyltransferase (242 aa).

The S-adenosyl-L-methionine site is built by E66, E91, D118, and D141. The active site involves D141. Substrate is bound by residues K145, D177, and 214–217; that span reads TKFE.

This sequence belongs to the class I-like SAM-binding methyltransferase superfamily. TrmB family. As to quaternary structure, monomer.

The catalysed reaction is guanosine(46) in tRNA + S-adenosyl-L-methionine = N(7)-methylguanosine(46) in tRNA + S-adenosyl-L-homocysteine. It participates in tRNA modification; N(7)-methylguanine-tRNA biosynthesis. Catalyzes the formation of N(7)-methylguanine at position 46 (m7G46) in tRNA. This is tRNA (guanine-N(7)-)-methyltransferase from Buchnera aphidicola subsp. Baizongia pistaciae (strain Bp).